A 362-amino-acid polypeptide reads, in one-letter code: MIDAGTDRGDIAITVRDAYKRYGDFVALDHVDFVVPTGSLTALLGPSGSGKSTLLRTIAGLDQPDTGTVTIYGRDVTRVPPQRRGIGFVFQHYAAFKHLTVRDNVAYGLKVRKRPKAEIKAKVDNLLEVVGLSGFQGRYPNQLAGGQRQRMALARALAVDPQVLLLDEPFGALDAKVREDLRAWLRRLHDEVHVTTVLVTHDQAEALDVADRIAVLNQGRIEQIGSPTEVYDAPTNAFVMSFLGAVSTLNGTLVRPHDIRVGRTPEMAVAAEDGTAESTGVARAIVDRVVKLGFEVRVELTSAATGGPFTAQITRGDAEALALREGDTVYVRATRVPPITAGATTVPALSRDGADEATLTSA.

An ABC transporter domain is found at 13–243 (ITVRDAYKRY…PTNAFVMSFL (231 aa)). 45–52 (GPSGSGKS) is a binding site for ATP.

This sequence belongs to the ABC transporter superfamily. Sulfate/tungstate importer (TC 3.A.1.6) family. As to quaternary structure, the complex is composed of two ATP-binding proteins (CysA), two transmembrane proteins (CysT and CysW) and a solute-binding protein (CysP).

The protein resides in the cell membrane. The enzyme catalyses sulfate(out) + ATP + H2O = sulfate(in) + ADP + phosphate + H(+). It carries out the reaction thiosulfate(out) + ATP + H2O = thiosulfate(in) + ADP + phosphate + H(+). In terms of biological role, part of the ABC transporter complex CysAWTP involved in sulfate/thiosulfate import. Responsible for energy coupling to the transport system. This chain is Sulfate/thiosulfate import ATP-binding protein CysA, found in Mycolicibacterium paratuberculosis (strain ATCC BAA-968 / K-10) (Mycobacterium paratuberculosis).